Here is a 111-residue protein sequence, read N- to C-terminus: Secreted RxLR effector protein 159 (111 aa).

The N-terminal stretch at Met-1–Ala-21 is a signal peptide. A RxLR-dEER motif is present at residues Arg-50–Arg-71. Asn-81 carries an N-linked (GlcNAc...) asparagine glycan.

The protein belongs to the RxLR effector family.

Its subcellular location is the secreted. It localises to the host nucleus. It is found in the host cytoplasm. Functionally, secreted effector that completely suppresses the host cell death induced by cell death-inducing proteins. The polypeptide is Secreted RxLR effector protein 159 (Plasmopara viticola (Downy mildew of grapevine)).